Reading from the N-terminus, the 127-residue chain is MSAQPNPKAFPLANAQLTNQILDLIQQAQHYKQLKKGANEATKTLNRGICEFIVMTADVEPIEIVLHLPLLCEDKNVPYVFLPSKTALGRACGVSRPVIAASVTTNEARELNAQIQAVKNEIEKLLI.

It belongs to the eukaryotic ribosomal protein eL8 family. Component of the U3 snoRNP particle. Binds to the C'/D and B/C motifs in U3 snoRNA. Component of the 25S U4/U6.U5 tri-snRNP particle, a subcomplex of the spliceosome. Binds to the 5' stem-loop of U4 snRNA.

It localises to the nucleus. The protein localises to the nucleolus. Its function is as follows. Common component of the spliceosome and rRNA processing machinery. In association with the spliceosomal U4/U6.U5 tri-snRNP particle, required for splicing of pre-mRNA. In association with box C/D snoRNPs, required for processing of pre-ribosomal RNA (rRNA) and site-specific 2'-O-methylation of substrate RNAs. Essential for the accumulation and stability of U4 snRNA, U6 snRNA, and box C/D snoRNAs. The protein is 13 kDa ribonucleoprotein-associated protein (SNU13) of Cryptococcus neoformans var. neoformans serotype D (strain B-3501A) (Filobasidiella neoformans).